A 422-amino-acid chain; its full sequence is Exopolygalacturonase clone GBGE184 (422 aa).

An N-terminal signal peptide occupies residues 1 to 31 (MANARSLVAKANNINVGSLILMALVFGSCVA). PbH1 repeat units lie at residues 200–226 (TENV…HLSN), 227–248 (ADNV…SVGR), 250–270 (SNNV…SVGS), 280–301 (VSGI…RIKT), and 310–331 (AVDI…IIDQ). Asn-229 carries an N-linked (GlcNAc...) asparagine glycan. Catalysis depends on Asp-241, which acts as the Proton donor. The cysteines at positions 243 and 260 are disulfide-linked. Asn-252 carries an N-linked (GlcNAc...) asparagine glycan. His-264 is an active-site residue. Asn-287 is a glycosylation site (N-linked (GlcNAc...) asparagine). 2 disulfide bridges follow: Cys-366-Cys-372 and Cys-404-Cys-420.

It belongs to the glycosyl hydrolase 28 family.

The protein localises to the secreted. The protein resides in the cell wall. It catalyses the reaction [(1-&gt;4)-alpha-D-galacturonosyl](n) + H2O = alpha-D-galacturonate + [(1-&gt;4)-alpha-D-galacturonosyl](n-1). May function in depolymerizing pectin during pollen development, germination, and tube growth. Acts as an exo-polygalacturonase. This chain is Exopolygalacturonase clone GBGE184 (PGA3), found in Arabidopsis thaliana (Mouse-ear cress).